Here is a 911-residue protein sequence, read N- to C-terminus: Gem-associated protein 4a (911 aa).

As to quaternary structure, component of the core survival motor neuron (SMN) complex composed of Smn, Gem2, Gem3, rig/Gem5 and one of 3 almost identical Gem4 paralogs encoded by Glos/Gem4a, Gem4b or Gem4c. Interacts with Smn; the interaction is probably indirect.

Its function is as follows. Component of the survival motor neuron (SMN) complex that catalyzes the assembly of small nuclear ribonucleoproteins (snRNPs), the building blocks of the spliceosome, and thereby plays an important role in the splicing of cellular pre-mRNAs. One of 3 almost identical paralogs (Glos/Gem4a, Gem4b and Gem4c), resulting from a genomic triplication, that have some redundant function. Required for neuromuscular function and organismal viability. The chain is Gem-associated protein 4a from Drosophila melanogaster (Fruit fly).